The following is a 73-amino-acid chain: Defensin-like protein 34 (73 aa).

Residues 1–25 form the signal peptide; it reads MASNKVSFFLVLCLCVLSTAEFGEA. Disulfide bonds link cysteine 33/cysteine 59, cysteine 45/cysteine 68, and cysteine 49/cysteine 70.

This sequence belongs to the DEFL family.

Its subcellular location is the secreted. The chain is Defensin-like protein 34 from Arabidopsis thaliana (Mouse-ear cress).